Reading from the N-terminus, the 317-residue chain is Putative 12-oxophytodienoate reductase 10 (317 aa).

Position 26–28 (26–28 (PVG)) interacts with FMN. 117 to 120 (HGAN) is a binding site for substrate. The Proton donor role is filled by Tyr122. Residue Arg169 participates in FMN binding. A substrate-binding site is contributed by Arg209. Residues Gly244 and 265–266 (GR) each bind FMN.

This sequence belongs to the NADH:flavin oxidoreductase/NADH oxidase family. The cofactor is FMN.

In terms of biological role, putative oxophytodienoate reductase that may be involved in the biosynthesis or metabolism of oxylipin signaling molecules. This is Putative 12-oxophytodienoate reductase 10 (OPR10) from Oryza sativa subsp. japonica (Rice).